The primary structure comprises 787 residues: Disintegrin and metalloproteinase domain-containing protein 32 (787 aa).

Positions 1 to 16 are cleaved as a signal peptide; that stretch reads MFRLWLLLAGLCGLLA. S17 is subject to Phosphoserine. Residues 17–174 constitute a propeptide that is removed on maturation; the sequence is SRPGFQNSLL…PMDDNIFISE (158 aa). N-linked (GlcNAc...) asparagine glycans are attached at residues N39 and N125. Over 175 to 682 the chain is Extracellular; that stretch reads KSEPAVPDLF…ERASGKTENT (508 aa). Residues 186 to 383 enclose the Peptidase M12B domain; it reads LYLEMHIVVD…VGVKCLQNKP (198 aa). 4 disulfides stabilise this stretch: C295–C378, C337–C362, C339–C344, and C450–C471. The region spanning 391-479 is the Disintegrin domain; sequence KPVCGNGRLE…ECGPDITLIN (89 aa). Residues N465 and N598 are each glycosylated (N-linked (GlcNAc...) asparagine). The 33-residue stretch at 622 to 654 folds into the EGF-like domain; sequence SAHVCSQQCSGHGVCDSRNKCHCSPGYKPPNCQ. Disulfide bonds link C626/C636, C630/C642, and C644/C653. A helical membrane pass occupies residues 683–703; it reads WLLGFLIALPILIVTTAIVLA. Over 704-787 the chain is Cytoplasmic; the sequence is RKQLKKWFAK…DSTQTQSSSN (84 aa). Positions 715-787 are disordered; it reads EEFPSSESKS…DSTQTQSSSN (73 aa). Residues 728–749 show a composition bias toward polar residues; that stretch reads TQTYASQSSSEGSTQTYASQTR. Residues 771 to 787 are compositionally biased toward low complexity; the sequence is TSRSKSQDSTQTQSSSN.

Testis specific.

It is found in the membrane. In terms of biological role, may play a role in sperm development and fertilization This is a non-catalytic metalloprotease-like protein. The chain is Disintegrin and metalloproteinase domain-containing protein 32 (ADAM32) from Homo sapiens (Human).